The following is a 200-amino-acid chain: Nascent polypeptide-associated complex subunit alpha (200 aa).

Positions 1-19 are enriched in basic and acidic residues; the sequence is MADPRIEELPDEETKKPTV. 2 disordered regions span residues 1-52 and 120-165; these read MADP…SRNE and QQLA…EDKD. Residues 20-34 are compositionally biased toward acidic residues; it reads EELDESSDEESDAEA. Residues 49-114 form the NAC-A/B domain; that stretch reads SRNEKKARKA…AKIEDLNASA (66 aa). Basic and acidic residues predominate over residues 127 to 143; that stretch reads AEHDHAGHTHDHKHEAA. Over residues 144–160 the composition is skewed to acidic residues; it reads KEEEEEEDDGEEVDAEG. Residues 161–200 enclose the UBA domain; sequence IEDKDIELVMTQANVSRKKAIKALKENDNDIVNSIMALSV.

This sequence belongs to the NAC-alpha family. In terms of assembly, part of the nascent polypeptide-associated complex (NAC), consisting of EGD2 and EGD1. NAC associates with ribosomes via EGD1.

The protein localises to the cytoplasm. It is found in the nucleus. Its function is as follows. Component of the nascent polypeptide-associated complex (NAC), a dynamic component of the ribosomal exit tunnel, protecting the emerging polypeptides from interaction with other cytoplasmic proteins to ensure appropriate nascent protein targeting. The NAC complex also promotes mitochondrial protein import by enhancing productive ribosome interactions with the outer mitochondrial membrane and blocks the inappropriate interaction of ribosomes translating non-secretory nascent polypeptides with translocation sites in the membrane of the endoplasmic reticulum. EGD2 may also be involved in transcription regulation. This Chaetomium globosum (strain ATCC 6205 / CBS 148.51 / DSM 1962 / NBRC 6347 / NRRL 1970) (Soil fungus) protein is Nascent polypeptide-associated complex subunit alpha (EGD2).